Here is a 359-residue protein sequence, read N- to C-terminus: Outer membrane protein assembly factor BamC (359 aa).

The signal sequence occupies residues 1–21; that stretch reads MSTLNKYKTLIIISSLAAVSS. C22 is lipidated: N-palmitoyl cysteine. A lipid anchor (S-diacylglycerol cysteine) is attached at C22.

Belongs to the BamC family. Part of the Bam complex.

Its subcellular location is the cell outer membrane. In terms of biological role, part of the outer membrane protein assembly complex, which is involved in assembly and insertion of beta-barrel proteins into the outer membrane. This Kangiella koreensis (strain DSM 16069 / JCM 12317 / KCTC 12182 / SW-125) protein is Outer membrane protein assembly factor BamC.